The chain runs to 490 residues: Glutamyl-tRNA(Gln) amidotransferase subunit A (490 aa).

Active-site charge relay system residues include Lys-79 and Ser-154. The Acyl-ester intermediate role is filled by Ser-178.

The protein belongs to the amidase family. GatA subfamily. In terms of assembly, heterotrimer of A, B and C subunits.

It carries out the reaction L-glutamyl-tRNA(Gln) + L-glutamine + ATP + H2O = L-glutaminyl-tRNA(Gln) + L-glutamate + ADP + phosphate + H(+). Functionally, allows the formation of correctly charged Gln-tRNA(Gln) through the transamidation of misacylated Glu-tRNA(Gln) in organisms which lack glutaminyl-tRNA synthetase. The reaction takes place in the presence of glutamine and ATP through an activated gamma-phospho-Glu-tRNA(Gln). The chain is Glutamyl-tRNA(Gln) amidotransferase subunit A from Roseiflexus castenholzii (strain DSM 13941 / HLO8).